The following is a 342-amino-acid chain: uncharacterized protein (342 aa).

This sequence belongs to the cycloisomerase 2 family.

This is an uncharacterized protein from Staphylococcus aureus (strain bovine RF122 / ET3-1).